A 120-amino-acid polypeptide reads, in one-letter code: U13-lycotoxin-Ls1a (120 aa).

Positions 1-16 are cleaved as a signal peptide; that stretch reads MKILFVLISILHAVYC. A propeptide spanning residues 17-54 is cleaved from the precursor; the sequence is FSSEEDVDSAYLANELEPVEDINSEQYAALEPKEEHER. 4 disulfide bridges follow: cysteine 56/cysteine 70, cysteine 63/cysteine 76, cysteine 69/cysteine 87, and cysteine 78/cysteine 85. An Agouti domain is found at 56–95; sequence CADMGQDCKDDCDCCLNIATCNCWFGRYFCSCTFGDYQTC.

This sequence belongs to the neurotoxin 05 (agouti) family. Contains 6 disulfide bonds. In terms of tissue distribution, expressed by the venom gland.

It is found in the secreted. This chain is U13-lycotoxin-Ls1a, found in Lycosa singoriensis (Wolf spider).